The primary structure comprises 197 residues: MEKFVTLTSTVVPLPIQNIDTDQIIPARFLKAISKEGFGNNLFRDWRYDKNNNAISSFVLNNPIYNESKILVTGKNFGSGSSREHAAWAIADYGFKVVISSFFADIFKNNAMNNFVLPLVVSETFLSQIFESVNKNPKTTLTIDLENQIINNNSTRQLEKFIINAYKKECFLNGFDDIDFLLDKKYKIEEYERNCEY.

The protein belongs to the LeuD family. LeuD type 1 subfamily. Heterodimer of LeuC and LeuD.

The enzyme catalyses (2R,3S)-3-isopropylmalate = (2S)-2-isopropylmalate. Its pathway is amino-acid biosynthesis; L-leucine biosynthesis; L-leucine from 3-methyl-2-oxobutanoate: step 2/4. Functionally, catalyzes the isomerization between 2-isopropylmalate and 3-isopropylmalate, via the formation of 2-isopropylmaleate. This is 3-isopropylmalate dehydratase small subunit from Azobacteroides pseudotrichonymphae genomovar. CFP2.